Consider the following 323-residue polypeptide: Galectin-4 (323 aa).

Galectin domains follow at residues 19–150 (YYQP…INFI) and 194–323 (YFGR…YVQI). A beta-D-galactoside is bound at residue 256–262 (WGSEEKK). S258 is subject to Phosphoserine.

Monomer.

Galectin that binds lactose and a related range of sugars. May be involved in the assembly of adherens junctions. This is Galectin-4 (LGALS4) from Homo sapiens (Human).